Here is a 594-residue protein sequence, read N- to C-terminus: Alpha-1,4-glucan:maltose-1-phosphate maltosyltransferase (594 aa).

The disordered stretch occupies residues N244–G270. Residues K246, Q306, and D341 each coordinate alpha-maltose 1-phosphate. The Nucleophile role is filled by D377. Residue N378 participates in alpha-maltose 1-phosphate binding. E406 (proton donor) is an active-site residue. Position 517 to 518 (K517 to Y518) interacts with alpha-maltose 1-phosphate.

Belongs to the glycosyl hydrolase 13 family. GlgE subfamily. As to quaternary structure, homodimer.

It catalyses the reaction alpha-maltose 1-phosphate + [(1-&gt;4)-alpha-D-glucosyl](n) = [(1-&gt;4)-alpha-D-glucosyl](n+2) + phosphate. Functionally, maltosyltransferase that uses maltose 1-phosphate (M1P) as the sugar donor to elongate linear or branched alpha-(1-&gt;4)-glucans. Is involved in a branched alpha-glucan biosynthetic pathway from trehalose, together with TreS, Mak and GlgB. In Cereibacter sphaeroides (Rhodobacter sphaeroides), this protein is Alpha-1,4-glucan:maltose-1-phosphate maltosyltransferase.